The sequence spans 202 residues: Na(+)-translocating NADH-quinone reductase subunit E (202 aa).

A run of 6 helical transmembrane segments spans residues 5-25, 35-55, 81-101, 114-134, 144-164, and 180-200; these read VSLFITSVFIENMALAYFLGM, VSTAIGLGVAVIVVMSITVPL, FLGLLSYIALIAATVQILEMF, GVFLPLITVNCAIMGGVLFMV, LTYGVGAGFGWALAIALLAGI, and LGITFITVGLMSLGFMSFGGM.

Belongs to the NqrDE/RnfAE family. In terms of assembly, composed of six subunits; NqrA, NqrB, NqrC, NqrD, NqrE and NqrF.

The protein resides in the cell inner membrane. The catalysed reaction is a ubiquinone + n Na(+)(in) + NADH + H(+) = a ubiquinol + n Na(+)(out) + NAD(+). Functionally, NQR complex catalyzes the reduction of ubiquinone-1 to ubiquinol by two successive reactions, coupled with the transport of Na(+) ions from the cytoplasm to the periplasm. NqrA to NqrE are probably involved in the second step, the conversion of ubisemiquinone to ubiquinol. This is Na(+)-translocating NADH-quinone reductase subunit E from Psychrobacter sp. (strain PRwf-1).